The following is a 79-amino-acid chain: Small ribosomal subunit protein bS18 (79 aa).

It belongs to the bacterial ribosomal protein bS18 family. As to quaternary structure, part of the 30S ribosomal subunit. Forms a tight heterodimer with protein bS6.

Functionally, binds as a heterodimer with protein bS6 to the central domain of the 16S rRNA, where it helps stabilize the platform of the 30S subunit. This is Small ribosomal subunit protein bS18 from Listeria innocua serovar 6a (strain ATCC BAA-680 / CLIP 11262).